The following is a 324-amino-acid chain: Dehydrogenase/reductase SDR family member 7C-A (324 aa).

The N-terminal stretch at 1–17 (MAVPSVMVLPLLIVVFA) is a signal peptide. 41 to 65 (VITDAVSGMGSECARLFHAGGARLV) contributes to the NAD(+) binding site. Ser-178 provides a ligand contact to substrate. Catalysis depends on Tyr-191, which acts as the Proton acceptor.

The protein belongs to the short-chain dehydrogenases/reductases (SDR) family.

It is found in the secreted. Putative oxidoreductase. In Danio rerio (Zebrafish), this protein is Dehydrogenase/reductase SDR family member 7C-A (dhrs7ca).